The following is a 193-amino-acid chain: Peptidyl-tRNA hydrolase (193 aa).

Y14 is a binding site for tRNA. Residue H19 is the Proton acceptor of the active site. Residues F64, N66, and N112 each coordinate tRNA.

Belongs to the PTH family. In terms of assembly, monomer.

The protein localises to the cytoplasm. The catalysed reaction is an N-acyl-L-alpha-aminoacyl-tRNA + H2O = an N-acyl-L-amino acid + a tRNA + H(+). Functionally, hydrolyzes ribosome-free peptidyl-tRNAs (with 1 or more amino acids incorporated), which drop off the ribosome during protein synthesis, or as a result of ribosome stalling. Catalyzes the release of premature peptidyl moieties from peptidyl-tRNA molecules trapped in stalled 50S ribosomal subunits, and thus maintains levels of free tRNAs and 50S ribosomes. In Bartonella bacilliformis (strain ATCC 35685 / KC583 / Herrer 020/F12,63), this protein is Peptidyl-tRNA hydrolase.